Here is a 274-residue protein sequence, read N- to C-terminus: Formamidopyrimidine-DNA glycosylase (274 aa).

Catalysis depends on proline 2, which acts as the Schiff-base intermediate with DNA. The active-site Proton donor is the glutamate 3. Lysine 59 (proton donor; for beta-elimination activity) is an active-site residue. Residues histidine 93, arginine 112, and arginine 155 each coordinate DNA. The FPG-type zinc finger occupies 240–274 (QVYGRTGRPCPRCGQPLERVRLGGRSTHFCPRCQV). The active-site Proton donor; for delta-elimination activity is the arginine 264.

The protein belongs to the FPG family. Monomer. Zn(2+) serves as cofactor.

The catalysed reaction is Hydrolysis of DNA containing ring-opened 7-methylguanine residues, releasing 2,6-diamino-4-hydroxy-5-(N-methyl)formamidopyrimidine.. It carries out the reaction 2'-deoxyribonucleotide-(2'-deoxyribose 5'-phosphate)-2'-deoxyribonucleotide-DNA = a 3'-end 2'-deoxyribonucleotide-(2,3-dehydro-2,3-deoxyribose 5'-phosphate)-DNA + a 5'-end 5'-phospho-2'-deoxyribonucleoside-DNA + H(+). Its function is as follows. Involved in base excision repair of DNA damaged by oxidation or by mutagenic agents. Acts as a DNA glycosylase that recognizes and removes damaged bases. Has a preference for oxidized purines, such as 7,8-dihydro-8-oxoguanine (8-oxoG). Has AP (apurinic/apyrimidinic) lyase activity and introduces nicks in the DNA strand. Cleaves the DNA backbone by beta-delta elimination to generate a single-strand break at the site of the removed base with both 3'- and 5'-phosphates. This chain is Formamidopyrimidine-DNA glycosylase, found in Moorella thermoacetica (strain ATCC 39073 / JCM 9320).